Here is a 419-residue protein sequence, read N- to C-terminus: Histidine--tRNA ligase (419 aa).

The protein belongs to the class-II aminoacyl-tRNA synthetase family.

Its subcellular location is the cytoplasm. It carries out the reaction tRNA(His) + L-histidine + ATP = L-histidyl-tRNA(His) + AMP + diphosphate + H(+). The polypeptide is Histidine--tRNA ligase (Pyrobaculum arsenaticum (strain DSM 13514 / JCM 11321 / PZ6)).